The sequence spans 143 residues: Large ribosomal subunit protein uL11 (143 aa).

This sequence belongs to the universal ribosomal protein uL11 family. Part of the ribosomal stalk of the 50S ribosomal subunit. Interacts with L10 and the large rRNA to form the base of the stalk. L10 forms an elongated spine to which L12 dimers bind in a sequential fashion forming a multimeric L10(L12)X complex. In terms of processing, one or more lysine residues are methylated.

Functionally, forms part of the ribosomal stalk which helps the ribosome interact with GTP-bound translation factors. The sequence is that of Large ribosomal subunit protein uL11 from Caulobacter sp. (strain K31).